The following is a 339-amino-acid chain: Biotin synthase (339 aa).

A Radical SAM core domain is found at 47-276 (FYGKKVKLNM…SKEIRISGGR (230 aa)). Positions 65, 69, and 72 each coordinate [4Fe-4S] cluster. [2Fe-2S] cluster contacts are provided by cysteine 109, cysteine 141, cysteine 201, and arginine 271.

It belongs to the radical SAM superfamily. Biotin synthase family. As to quaternary structure, homodimer. [4Fe-4S] cluster serves as cofactor. [2Fe-2S] cluster is required as a cofactor.

The catalysed reaction is (4R,5S)-dethiobiotin + (sulfur carrier)-SH + 2 reduced [2Fe-2S]-[ferredoxin] + 2 S-adenosyl-L-methionine = (sulfur carrier)-H + biotin + 2 5'-deoxyadenosine + 2 L-methionine + 2 oxidized [2Fe-2S]-[ferredoxin]. The protein operates within cofactor biosynthesis; biotin biosynthesis; biotin from 7,8-diaminononanoate: step 2/2. In terms of biological role, catalyzes the conversion of dethiobiotin (DTB) to biotin by the insertion of a sulfur atom into dethiobiotin via a radical-based mechanism. The sequence is that of Biotin synthase from Bacillus velezensis (strain DSM 23117 / BGSC 10A6 / LMG 26770 / FZB42) (Bacillus amyloliquefaciens subsp. plantarum).